The sequence spans 615 residues: Putative lipase ATG15 (615 aa).

The Cytoplasmic segment spans residues 1–22; it reads MKQLGEEHPLISTKRPRAKKRR. Residues 23-43 form a helical; Signal-anchor for type II membrane protein membrane-spanning segment; it reads SIAICAAVLTLIAFGFIRFVP. Topologically, residues 44-615 are lumenal; it reads KDILAGGWYE…NSAAHHVSSI (572 aa). Asn-253, Asn-276, and Asn-360 each carry an N-linked (GlcNAc...) asparagine glycan. The Charge relay system role is filled by Ser-378. The interval 520–559 is disordered; it reads NKNDEPPLPNPLHPKPPSTVRSSNMPHEQSPNASRSLSSL. Over residues 525–536 the composition is skewed to pro residues; sequence PPLPNPLHPKPP. Over residues 538 to 559 the composition is skewed to polar residues; the sequence is TVRSSNMPHEQSPNASRSLSSL. Asn-551 carries an N-linked (GlcNAc...) asparagine glycan.

This sequence belongs to the AB hydrolase superfamily. Lipase family. In terms of assembly, binds to both phosphatidylinositol (PI) and phosphatidylinositol 3,5-bisphosphate (PIP2).

It localises to the endosome. It is found in the multivesicular body membrane. The protein localises to the prevacuolar compartment membrane. It carries out the reaction a triacylglycerol + H2O = a diacylglycerol + a fatty acid + H(+). In terms of biological role, lipase which is essential for lysis of subvacuolar cytoplasm to vacuole targeted bodies and intravacuolar autophagic bodies. Involved in the lysis of intravacuolar multivesicular body (MVB) vesicles. The intravacuolar membrane disintegration by ATG15 is critical to life span extension. The chain is Putative lipase ATG15 (ATG15) from Debaryomyces hansenii (strain ATCC 36239 / CBS 767 / BCRC 21394 / JCM 1990 / NBRC 0083 / IGC 2968) (Yeast).